The primary structure comprises 857 residues: DNA mismatch repair protein MutS (857 aa).

ATP is bound at residue 613–620 (GPNMGGKS). The interval 797–820 (TSLPHEQPAAHKAKDAPQVPHQSD) is disordered.

This sequence belongs to the DNA mismatch repair MutS family.

Its function is as follows. This protein is involved in the repair of mismatches in DNA. It is possible that it carries out the mismatch recognition step. This protein has a weak ATPase activity. The polypeptide is DNA mismatch repair protein MutS (Pseudomonas putida (strain ATCC 47054 / DSM 6125 / CFBP 8728 / NCIMB 11950 / KT2440)).